We begin with the raw amino-acid sequence, 254 residues long: Proteasome subunit alpha type-7 (254 aa).

The O-linked (GlcNAc) serine glycan is linked to Ser-136. Phosphotyrosine is present on Tyr-159. Lys-233 carries the post-translational modification N6-acetyllysine.

This sequence belongs to the peptidase T1A family. The 26S proteasome consists of a 20S proteasome core and two 19S regulatory subunits. The 20S proteasome core is a barrel-shaped complex made of 28 subunits that are arranged in four stacked rings. The two outer rings are each formed by seven alpha subunits, and the two inner rings are formed by seven beta subunits. The proteolytic activity is exerted by three beta-subunits PSMB5, PSMB6 and PSMB7. PSMA7 interacts directly with the PSMG1-PSMG2 heterodimer which promotes 20S proteasome assembly. Interacts with HIF1A. Interacts with RAB7A. Interacts with PRKN. Interacts with ABL1 and ABL2. Interacts with EMAP2. Interacts with MAVS. Ubiquitous.

The protein localises to the cytoplasm. Its subcellular location is the nucleus. Component of the 20S core proteasome complex involved in the proteolytic degradation of most intracellular proteins. This complex plays numerous essential roles within the cell by associating with different regulatory particles. Associated with two 19S regulatory particles, forms the 26S proteasome and thus participates in the ATP-dependent degradation of ubiquitinated proteins. The 26S proteasome plays a key role in the maintenance of protein homeostasis by removing misfolded or damaged proteins that could impair cellular functions, and by removing proteins whose functions are no longer required. Associated with the PA200 or PA28, the 20S proteasome mediates ubiquitin-independent protein degradation. This type of proteolysis is required in several pathways including spermatogenesis (20S-PA200 complex) or generation of a subset of MHC class I-presented antigenic peptides (20S-PA28 complex). Inhibits the transactivation function of HIF-1A under both normoxic and hypoxia-mimicking conditions. The interaction with EMAP2 increases the proteasome-mediated HIF-1A degradation under the hypoxic conditions. Plays a role in hepatitis C virus internal ribosome entry site-mediated translation. Mediates nuclear translocation of the androgen receptor (AR) and thereby enhances androgen-mediated transactivation. Promotes MAVS degradation and thereby negatively regulates MAVS-mediated innate immune response. The protein is Proteasome subunit alpha type-7 (Psma7) of Rattus norvegicus (Rat).